The following is a 341-amino-acid chain: S-adenosylmethionine:tRNA ribosyltransferase-isomerase (341 aa).

It belongs to the QueA family. In terms of assembly, monomer.

It is found in the cytoplasm. It carries out the reaction 7-aminomethyl-7-carbaguanosine(34) in tRNA + S-adenosyl-L-methionine = epoxyqueuosine(34) in tRNA + adenine + L-methionine + 2 H(+). It participates in tRNA modification; tRNA-queuosine biosynthesis. Its function is as follows. Transfers and isomerizes the ribose moiety from AdoMet to the 7-aminomethyl group of 7-deazaguanine (preQ1-tRNA) to give epoxyqueuosine (oQ-tRNA). This chain is S-adenosylmethionine:tRNA ribosyltransferase-isomerase, found in Chlorobium phaeobacteroides (strain DSM 266 / SMG 266 / 2430).